Reading from the N-terminus, the 240-residue chain is Proteasome subunit beta type-1 (240 aa).

The residue at position 1 (M1) is an N-acetylmethionine. A propeptide spanning residues 1–27 is cleaved from the precursor; the sequence is MLSTAAYRDVERELGMGPHGSAGPVQL. O-linked (GlcNAc) serine glycosylation is present at S57. Residues S61 and S67 each carry the phosphoserine modification. Position 149 is a phosphotyrosine (Y149). S161 is modified (phosphoserine). The residue at position 203 (K203) is an N6-acetyllysine. A glycan (O-linked (GlcNAc) serine) is linked at S208.

It belongs to the peptidase T1B family. In terms of assembly, the 26S proteasome consists of a 20S proteasome core and two 19S regulatory subunits. The 20S proteasome core is a barrel-shaped complex made of 28 subunits that are arranged in four stacked rings. The two outer rings are each formed by seven alpha subunits, and the two inner rings are formed by seven beta subunits. The proteolytic activity is exerted by three beta-subunits PSMB5, PSMB6 and PSMB7. Interacts with SERPINB2. Interacts with RFPL4A. As to expression, detected in liver (at protein level).

The protein resides in the cytoplasm. It is found in the nucleus. Functionally, non-catalytic component of the 20S core proteasome complex involved in the proteolytic degradation of most intracellular proteins. This complex plays numerous essential roles within the cell by associating with different regulatory particles. Associated with two 19S regulatory particles, forms the 26S proteasome and thus participates in the ATP-dependent degradation of ubiquitinated proteins. The 26S proteasome plays a key role in the maintenance of protein homeostasis by removing misfolded or damaged proteins that could impair cellular functions, and by removing proteins whose functions are no longer required. Associated with the PA200 or PA28, the 20S proteasome mediates ubiquitin-independent protein degradation. This type of proteolysis is required in several pathways including spermatogenesis (20S-PA200 complex) or generation of a subset of MHC class I-presented antigenic peptides (20S-PA28 complex). In Mus musculus (Mouse), this protein is Proteasome subunit beta type-1 (Psmb1).